Here is a 355-residue protein sequence, read N- to C-terminus: MTQNYRITLLSGDGIGPEIMAVAVDVLKAVGKQLDLNFEFKEALMGGVAIDATGEPLPEESLQACRDSDAVLLAAIGGYKWDNLPRPERPETGLLALRAGLGLFANRARLLFCPHVLDASSLKREVVEGVDIMVVRELTGGIYFGQPKGIFETETGKNEGSNTMAYGESEIDRIGRVGFETAKKRQGRLCSVDKANVLDVSQLWRDRIMALAADYPEVELSHLYVDNAAMQLVRWPKQFDTIVTGNLFGDILSDAAAMLTGSIGMLPSASLGASGPGVFEPVHGSAPDIAGQDKANPLAQVLSAAMMLRYGLDEPAASDPVEKAVLKVLDWGYPTGDIMSEGMKAVGCRKWGICY.

78 to 91 (GYKWDNLPRPERPE) serves as a coordination point for NAD(+). 3 residues coordinate substrate: Arg-98, Arg-136, and Asp-226. Mg(2+)-binding residues include Asp-226, Asp-250, and Asp-254. 284–296 (GSAPDIAGQDKAN) lines the NAD(+) pocket.

Belongs to the isocitrate and isopropylmalate dehydrogenases family. LeuB type 1 subfamily. Homodimer. Mg(2+) is required as a cofactor. Mn(2+) serves as cofactor.

It localises to the cytoplasm. The catalysed reaction is (2R,3S)-3-isopropylmalate + NAD(+) = 4-methyl-2-oxopentanoate + CO2 + NADH. The protein operates within amino-acid biosynthesis; L-leucine biosynthesis; L-leucine from 3-methyl-2-oxobutanoate: step 3/4. Functionally, catalyzes the oxidation of 3-carboxy-2-hydroxy-4-methylpentanoate (3-isopropylmalate) to 3-carboxy-4-methyl-2-oxopentanoate. The product decarboxylates to 4-methyl-2 oxopentanoate. This is 3-isopropylmalate dehydrogenase (leuB) from Arthrospira platensis (Spirulina platensis).